The following is a 408-amino-acid chain: Putative UPF0496 protein 2 (408 aa).

Transmembrane regions (helical) follow at residues 224–244 and 252–272; these read RIARGTAAAALVGACAAAIVA and ALVGIGVAAAAFGATPAGAAR. Residues 385 to 408 are disordered; that stretch reads MARGLPPPSPATVTTTSEERLTSS.

It belongs to the UPF0496 family.

The protein resides in the membrane. In Oryza sativa subsp. japonica (Rice), this protein is Putative UPF0496 protein 2.